We begin with the raw amino-acid sequence, 282 residues long: Elongation factor Ts (282 aa).

Positions 79 to 82 (TDFV) are involved in Mg(2+) ion dislocation from EF-Tu.

Belongs to the EF-Ts family.

It is found in the cytoplasm. Functionally, associates with the EF-Tu.GDP complex and induces the exchange of GDP to GTP. It remains bound to the aminoacyl-tRNA.EF-Tu.GTP complex up to the GTP hydrolysis stage on the ribosome. This Shewanella piezotolerans (strain WP3 / JCM 13877) protein is Elongation factor Ts.